We begin with the raw amino-acid sequence, 602 residues long: NADH-quinone oxidoreductase subunit C/D (602 aa).

Positions 1–192 (MVNNMTDLTA…DPFELTKAKQ (192 aa)) are NADH dehydrogenase I subunit C. The interval 216–602 (DFMFLNLGPN…IDFVMSDVDR (387 aa)) is NADH dehydrogenase I subunit D.

In the N-terminal section; belongs to the complex I 30 kDa subunit family. This sequence in the C-terminal section; belongs to the complex I 49 kDa subunit family. As to quaternary structure, NDH-1 is composed of 13 different subunits. Subunits NuoB, CD, E, F, and G constitute the peripheral sector of the complex.

It is found in the cell inner membrane. The enzyme catalyses a quinone + NADH + 5 H(+)(in) = a quinol + NAD(+) + 4 H(+)(out). Functionally, NDH-1 shuttles electrons from NADH, via FMN and iron-sulfur (Fe-S) centers, to quinones in the respiratory chain. The immediate electron acceptor for the enzyme in this species is believed to be ubiquinone. Couples the redox reaction to proton translocation (for every two electrons transferred, four hydrogen ions are translocated across the cytoplasmic membrane), and thus conserves the redox energy in a proton gradient. This is NADH-quinone oxidoreductase subunit C/D from Klebsiella pneumoniae (strain 342).